Reading from the N-terminus, the 101-residue chain is Small ribosomal subunit protein uS14 (101 aa).

This sequence belongs to the universal ribosomal protein uS14 family. In terms of assembly, part of the 30S ribosomal subunit. Contacts proteins S3 and S10.

In terms of biological role, binds 16S rRNA, required for the assembly of 30S particles and may also be responsible for determining the conformation of the 16S rRNA at the A site. This Proteus mirabilis (strain HI4320) protein is Small ribosomal subunit protein uS14.